The chain runs to 166 residues: Deglycase TK1284 (166 aa).

Positions 1–166 (MKVLILSADG…WMREFVKLLR (166 aa)) constitute a PfpI endopeptidase domain. His101 is an active-site residue.

This sequence belongs to the peptidase C56 family. As to quaternary structure, homohexamer formed by a dimer of trimers that assemble into a hollow ring structure.

It is found in the cytoplasm. It carries out the reaction N(omega)-(1-hydroxy-2-oxopropyl)-L-arginyl-[protein] + H2O = lactate + L-arginyl-[protein] + H(+). The enzyme catalyses N(6)-(1-hydroxy-2-oxopropyl)-L-lysyl-[protein] + H2O = lactate + L-lysyl-[protein] + H(+). It catalyses the reaction S-(1-hydroxy-2-oxopropyl)-L-cysteinyl-[protein] + H2O = lactate + L-cysteinyl-[protein] + H(+). The catalysed reaction is N(omega)-(1-hydroxy-2-oxoethyl)-L-arginyl-[protein] + H2O = L-arginyl-[protein] + glycolate + H(+). It carries out the reaction N(6)-(1-hydroxy-2-oxoethyl)-L-lysyl-[protein] + H2O = glycolate + L-lysyl-[protein] + H(+). The enzyme catalyses S-(1-hydroxy-2-oxoethyl)-L-cysteinyl-[protein] + H2O = glycolate + L-cysteinyl-[protein] + H(+). Functionally, deglycase that catalyzes the deglycation of the Maillard adducts formed between amino groups of proteins and reactive carbonyl groups of glyoxals. Thus, functions as a protein deglycase that repairs methylglyoxal- and glyoxal-glycated proteins, and releases repaired proteins and lactate or glycolate, respectively. Deglycates cysteine, arginine and lysine residues in proteins, and thus reactivates these proteins by reversing glycation by glyoxals. Acts on early glycation intermediates (hemithioacetals and aminocarbinols), preventing the formation of advanced glycation endproducts (AGE) that cause irreversible damage. Also displays proteolytic activity. The protein is Deglycase TK1284 of Thermococcus kodakarensis (strain ATCC BAA-918 / JCM 12380 / KOD1) (Pyrococcus kodakaraensis (strain KOD1)).